The sequence spans 137 residues: 3-hydroxyacyl-[acyl-carrier-protein] dehydratase FabZ (137 aa).

H46 is a catalytic residue.

This sequence belongs to the thioester dehydratase family. FabZ subfamily.

The protein localises to the cytoplasm. The enzyme catalyses a (3R)-hydroxyacyl-[ACP] = a (2E)-enoyl-[ACP] + H2O. Involved in unsaturated fatty acids biosynthesis. Catalyzes the dehydration of short chain beta-hydroxyacyl-ACPs and long chain saturated and unsaturated beta-hydroxyacyl-ACPs. This is 3-hydroxyacyl-[acyl-carrier-protein] dehydratase FabZ from Thermotoga maritima (strain ATCC 43589 / DSM 3109 / JCM 10099 / NBRC 100826 / MSB8).